Here is a 410-residue protein sequence, read N- to C-terminus: Ribosomal RNA large subunit methyltransferase G (410 aa).

It belongs to the methyltransferase superfamily. RlmG family.

The protein resides in the cytoplasm. The enzyme catalyses guanosine(1835) in 23S rRNA + S-adenosyl-L-methionine = N(2)-methylguanosine(1835) in 23S rRNA + S-adenosyl-L-homocysteine + H(+). Its function is as follows. Specifically methylates the guanine in position 1835 (m2G1835) of 23S rRNA. The sequence is that of Ribosomal RNA large subunit methyltransferase G from Alteromonas mediterranea (strain DSM 17117 / CIP 110805 / LMG 28347 / Deep ecotype).